Here is a 306-residue protein sequence, read N- to C-terminus: Prophage bactoprenol glucosyl transferase homolog (306 aa).

Residues 1 to 227 lie on the Cytoplasmic side of the membrane; it reads MKISLVVPVF…ITSFSTFPLR (227 aa). Residues 228–248 form a helical membrane-spanning segment; the sequence is IWTYIGLVVASVAFIYGAWMI. The Periplasmic segment spans residues 249-262; that stretch reads LDTIIFGNAVRGYP. The helical transmembrane segment at 263 to 283 threads the bilayer; the sequence is SLLVSILFLGGIQMIGIGVLG. The Cytoplasmic segment spans residues 284–306; the sequence is EYIGRTYIETKKRPKYIIKRVKK.

The protein belongs to the glycosyltransferase 2 family. GtrB subfamily.

The protein resides in the cell inner membrane. Involved in O antigen modification. Catalyzes the transfer of the glucose residue from UDP-glucose to a lipid carrier. This chain is Prophage bactoprenol glucosyl transferase homolog (yfdH), found in Escherichia coli (strain K12).